The primary structure comprises 258 residues: UDP-N-acetylenolpyruvoylglucosamine reductase (258 aa).

Arg142 is a catalytic residue. Ser184 acts as the Proton donor in catalysis. Glu254 is a catalytic residue.

This sequence belongs to the MurB family. FAD serves as cofactor.

Its subcellular location is the cytoplasm. It catalyses the reaction UDP-N-acetyl-alpha-D-muramate + NADP(+) = UDP-N-acetyl-3-O-(1-carboxyvinyl)-alpha-D-glucosamine + NADPH + H(+). The protein operates within cell wall biogenesis; peptidoglycan biosynthesis. In terms of biological role, cell wall formation. In Campylobacter jejuni subsp. jejuni serotype O:2 (strain ATCC 700819 / NCTC 11168), this protein is UDP-N-acetylenolpyruvoylglucosamine reductase.